The chain runs to 23 residues: Magainin-R1 (23 aa).

As to expression, expressed by the skin glands.

The protein localises to the secreted. Functionally, antimicrobial peptide. In Xenopus ruwenzoriensis (Uganda clawed frog), this protein is Magainin-R1.